Consider the following 455-residue polypeptide: Inactive peptidyl-prolyl cis-trans isomerase shutdown (455 aa).

The disordered stretch occupies residues 34–54 (SQQNHARDLGLDSDSDSDYED). The span at 44 to 54 (LDSDSDSDYED) shows a compositional bias: acidic residues. The PPIase FKBP-type domain occupies 103–192 (KARVSVRYSG…LFKVEVIDYS (90 aa)). 2 TPR repeats span residues 218-251 (AVDL…LNYC) and 303-336 (CKAL…QPAN).

It belongs to the FKBP6 family. Interacts with Hsp83. In terms of tissue distribution, strongly expressed in the germline stem cells and in 16-cell cysts. Present in the germ cells throughout embryogenesis. Defects are due to derepression of transposable elements and impaired piRNA biogenesis.

It localises to the cytoplasm. The protein resides in the cytoplasmic ribonucleoprotein granule. Its function is as follows. Co-chaperone required during oogenesis to repress transposable elements and prevent their mobilization, which is essential for the germline integrity. Acts via the piRNA metabolic process, which mediates the repression of transposable elements during meiosis by forming complexes composed of piRNAs and Piwi proteins and govern the methylation and subsequent repression of transposons. Acts as a co-chaperone via its interaction with Hsp83/HSP90 and is required for the biogenesis of all three piRNA major populations. In Drosophila melanogaster (Fruit fly), this protein is Inactive peptidyl-prolyl cis-trans isomerase shutdown.